The primary structure comprises 551 residues: Solute carrier family 22 member 13 (551 aa).

Topologically, residues 1–20 are cytoplasmic; it reads MAQFVQVLAEIGDFGRFQIQ. The helical transmembrane segment at 21–41 threads the bilayer; that stretch reads LLILLCVLNFLSPFYFFAHVF. Over 42-138 the chain is Extracellular; sequence MVLDEPHHCA…LVCDRKHLKD (97 aa). N-linked (GlcNAc...) asparagine glycans are attached at residues asparagine 57, asparagine 61, asparagine 92, and asparagine 104. Residues 139 to 159 traverse the membrane as a helical segment; sequence TTQSVFMAGLLVGTLMFGPLC. Over 160-167 the chain is Cytoplasmic; it reads DRIGRKAT. A helical membrane pass occupies residues 168–188; it reads ILAQLLLFTLIGLATAFVPSF. Over 189 to 195 the chain is Extracellular; that stretch reads ELYMALR. The chain crosses the membrane as a helical span at residues 196-216; sequence FAVATAVAGLSFSNVTLLTEW. The Cytoplasmic portion of the chain corresponds to 217–224; sequence VGPSWRTQ. A helical membrane pass occupies residues 225 to 245; it reads AVVLAQCNFSLGQMVLAGLAY. The Extracellular segment spans residues 246 to 251; it reads GFRNWR. Residues 252 to 272 traverse the membrane as a helical segment; the sequence is LLQITGTAPGLLLFFYFWALP. At 273–332 the chain is on the cytoplasmic side; sequence ESARWLLTRGRMDEAIQLIQKAASVNRRKLSPELMNQLVPEKTGPSGNALDLFRHPQLRK. A helical membrane pass occupies residues 333–353; sequence VTLIIFCVWFVDSLGYYGLSL. Glutamine 354 is a topological domain (extracellular). The chain crosses the membrane as a helical span at residues 355–375; the sequence is VGDFGLDVYLTQLIFGAVEVP. The Cytoplasmic segment spans residues 376 to 397; it reads ARCSSIFMMQRFGRKWSQLGTL. Residues 398–418 traverse the membrane as a helical segment; it reads VLGGLMCIIIIFIPADLPVVV. The Extracellular segment spans residues 419 to 427; the sequence is TMLAVVGKM. A helical transmembrane segment spans residues 428–448; it reads ATAAAFTISYVYSAELFPTIL. Topologically, residues 449 to 452 are cytoplasmic; it reads RQTG. A helical membrane pass occupies residues 453–473; sequence MGLVGIFSRIGGILTPLVILL. Residues 474–478 are Extracellular-facing; the sequence is GEYHA. Residues 479 to 499 traverse the membrane as a helical segment; that stretch reads ALPMLIYGSLPIVAGLLCTLL. Residues 500 to 551 lie on the Cytoplasmic side of the membrane; that stretch reads PETHGQGLKDTLQDLELGPHPRSPKSVPSEKETEAKGRTSSPGVAFVSSTYF. A disordered region spans residues 511–551; it reads LQDLELGPHPRSPKSVPSEKETEAKGRTSSPGVAFVSSTYF. Residues 527 to 536 are compositionally biased toward basic and acidic residues; sequence PSEKETEAKG. Polar residues predominate over residues 537–551; it reads RTSSPGVAFVSSTYF.

It belongs to the major facilitator (TC 2.A.1) superfamily. Organic cation transporter (TC 2.A.1.19) family. Glycosylated. As to expression, ubiquitous. Highly expressed in kidneys and to a weaker extent in brain, heart, and intestine. In kidneys, expressed in proximal convoluted tubule. In kidneys, also expressed in cortical collecting duct, whereas glomerulus and thick ascending limb exhibit no expression.

The protein localises to the apical cell membrane. The catalysed reaction is urate(out) + (S)-lactate(in) = urate(in) + (S)-lactate(out). The enzyme catalyses urate(out) + succinate(in) = urate(in) + succinate(out). It catalyses the reaction urate(out) + glutathione(in) = urate(in) + glutathione(out). It carries out the reaction nicotinate(in) + urate(out) = nicotinate(out) + urate(in). The catalysed reaction is orotate(out) + a carboxylate(in) = orotate(in) + a carboxylate(out). Its function is as follows. Anion antiporter that mediates the transport of urate, orotate and nicotinate in exchange for organic or inorganic anions. Translocates urate and orotate across the apical membrane of proximal tubule epithelial cells and involved in urate renal reabsorption. Possibly involved in orotate renal reabsorption and nicotinate intestinal reabsorption. Mediates urate uptake by an exchange with organic anions such as (S)-lactate, succinate, glutathione and nicotinate. Urate and orotate transports are Cl(-)-dependent. Shows similar transport characteristics as the urate/orotate renal antiporter SLC22A12/URAT1 and may act as a compensator of SLC22A12/URAT1 in certain conditions. The protein is Solute carrier family 22 member 13 of Homo sapiens (Human).